The following is a 128-amino-acid chain: Fluoride-specific ion channel FluC (128 aa).

4 consecutive transmembrane segments (helical) span residues 5 to 25, 35 to 55, 67 to 87, and 96 to 116; these read IVAIFVGAGLGALLRWFLSIG, LGTLVSNLIGGYLIGIAVVAF, LFVITGFMGGLTTFSTYSVEV, and FGWALAVAALHLIGSFTLTGL. Glycine 75 and threonine 78 together coordinate Na(+).

This sequence belongs to the fluoride channel Fluc/FEX (TC 1.A.43) family.

It localises to the cell inner membrane. It carries out the reaction fluoride(in) = fluoride(out). Its activity is regulated as follows. Na(+) is not transported, but it plays an essential structural role and its presence is essential for fluoride channel function. Functionally, fluoride-specific ion channel. Important for reducing fluoride concentration in the cell, thus reducing its toxicity. This Burkholderia thailandensis (strain ATCC 700388 / DSM 13276 / CCUG 48851 / CIP 106301 / E264) protein is Fluoride-specific ion channel FluC.